A 266-amino-acid chain; its full sequence is 3',5'-cyclic-nucleotide phosphodiesterase alr5338 (266 aa).

Fe cation-binding residues include aspartate 14, histidine 16, aspartate 56, asparagine 86, histidine 155, histidine 194, and histidine 196. AMP-binding positions include histidine 16, aspartate 56, and 86 to 87 (NH). Residue histidine 196 participates in AMP binding.

This sequence belongs to the cyclic nucleotide phosphodiesterase class-III family. Requires Fe(2+) as cofactor. The cofactor is Mn(2+).

It carries out the reaction a nucleoside 3',5'-cyclic phosphate + H2O = a nucleoside 5'-phosphate + H(+). The catalysed reaction is 3',5'-cyclic AMP + H2O = AMP + H(+). The enzyme catalyses 3',5'-cyclic GMP + H2O = GMP + H(+). With respect to regulation, activated by iron and manganese. In terms of biological role, hydrolyzes cAMP to 5'-AMP. Plays an important regulatory role in modulating the intracellular concentration of cAMP, thereby influencing cAMP-dependent processes. Can also hydrolyze cGMP. The chain is 3',5'-cyclic-nucleotide phosphodiesterase alr5338 from Nostoc sp. (strain PCC 7120 / SAG 25.82 / UTEX 2576).